Consider the following 172-residue polypeptide: Calcium channel flower homolog (172 aa).

Residues 1–32 are Cytoplasmic-facing; the sequence is MSSSGGAPGASASSAPPAQEEGMTWWYRWLCR. A helical membrane pass occupies residues 33-53; that stretch reads LSGVLGAVSCAISGLFNCITI. Residues 54-57 are Extracellular-facing; that stretch reads HPLN. Residues 58–78 traverse the membrane as a helical segment; sequence IAAGVWMIMNAFILLLCEAPF. Residues 79–102 lie on the Cytoplasmic side of the membrane; it reads CCQFIEFANTVAEKVDRLRSWQKA. Residues 103–123 form a helical membrane-spanning segment; sequence VFYCGMAVVPIVISLTLTTLL. At 124-125 the chain is on the extracellular side; sequence GN. A helical transmembrane segment spans residues 126–142; it reads AIAFATGVLYGLSALGK. The Cytoplasmic segment spans residues 143-172; that stretch reads KGDAISYARIQQQRQQADEEKLAETLEGEL.

This sequence belongs to the calcium channel flower family. In terms of assembly, interacts with adaptor protein complex 2 (AP-2). In terms of tissue distribution, detected in skin cells at low levels of expression (at protein level).

The protein localises to the cell membrane. Its subcellular location is the cytoplasmic vesicle. The protein resides in the secretory vesicle. It is found in the synaptic vesicle. It localises to the golgi apparatus. The protein localises to the vesicle. Its subcellular location is the early endosome. The protein resides in the recycling endosome. It is found in the endoplasmic reticulum membrane. Functionally, transmembrane protein which mediates synaptic endocytosis and fitness-based cell culling. In response to different stimulus strengths, controls two major modes of synaptic vesicle (SV) retrieval in hippocampal neurons; Clathrin-mediated endocytosis (CME) in response to mild stimulation and activity-dependent bulk endocytosis (ADBE) in response to strong stimulation. In cytotoxic T-lymphoocytes (CTLs) facilitates calcium-dependent endocytosis of cytotoxic granules at the immuno synapse. Different isoforms work as fitness fingerprints in 'loser' and 'winner' cells and thereby mediate win/lose decisions as part of the cell competition process. Functions with the other flower isoforms to produce tissue-specific fitness fingerprints that identify unfit or fit cells during cell selection processes in order to maintain tissue health. During cell competition, if levels of this isoform in cells is higher than in the surrounding neighboring cells, the cells are recognized as 'winner' cells, and do not undergo elimination via apoptosis. In terms of biological role, functions with the other flower isoforms to produce tissue-specific fitness fingerprints that identify unfit or fit cells during cell selection processes in order to maintain tissue health. During cell competition, if levels of this isoform in unfit cells is higher than in the surrounding neighboring cells, the cells are recognized as 'loser' cells, and undergo elimination via apoptosis to be replaced by the surrounding healthy 'winner' cell population. The polypeptide is Calcium channel flower homolog (CACFD1) (Homo sapiens (Human)).